A 647-amino-acid chain; its full sequence is A-type voltage-gated potassium channel KCND1 (647 aa).

The Cytoplasmic portion of the chain corresponds to 1-183 (MAAGVATWLP…RAFENPHTST (183 aa)). The interval 2–20 (AAGVATWLPFARAAAVGWL) is interaction with KCNIP1, KCNIP2, and other family members. Residues histidine 104, cysteine 131, and cysteine 132 each coordinate Zn(2+). The tract at residues 144–164 (AQRLAEDEEAEQTGDGPALPA) is disordered. A helical transmembrane segment spans residues 184 to 205 (AALVFYYVTGFFIAVSVIANVV). Residues 206–230 (ETIPCRGPARRPPREQPCGDRFPLA) lie on the Extracellular side of the membrane. A helical membrane pass occupies residues 231-252 (FFCMDTACVLIFTGEYLLRLFA). At 253–263 (APSRCRFLRSV) the chain is on the cytoplasmic side. The helical transmembrane segment at 264–284 (MSLIDVVAILPYYIGLLVPKN) threads the bilayer. The Extracellular portion of the chain corresponds to 285–287 (EDV). A helical; Voltage-sensor transmembrane segment spans residues 288–308 (SGAFVTLRVFRVFRIFKFSRH). The Cytoplasmic segment spans residues 309 to 323 (SQGLRILGYTLKSCA). Residues 310–323 (QGLRILGYTLKSCA) form an S4-S5 linker region. The helical transmembrane segment at 324 to 345 (SELGFLLFSLTMAIIIFATVMF) threads the bilayer. The Extracellular portion of the chain corresponds to 346–359 (YAEKGTSKTNFTSI). Residues 360–371 (PAAFWYTIVTMT) constitute an intramembrane region (helical). The short motif at 372-377 (TLGYGD) is the Selectivity filter element. The stretch at 372-379 (TLGYGDMV) is an intramembrane region. Residues 380 to 386 (PSTIAGK) are Extracellular-facing. Residues 387 to 415 (IFGSICSLSGVLVIALPVPVIVSNFSRIY) form a helical membrane-spanning segment. Residues 416-647 (HQNQRADKRR…LPETVKISSL (232 aa)) lie on the Cytoplasmic side of the membrane. The tract at residues 474 to 489 (FEQQHHHLLHCLEKTT) is required for dendritic targeting. The span at 510–520 (GRTSRSTSVSS) shows a compositional bias: low complexity. The segment at 510–531 (GRTSRSTSVSSQPVGPSSLLSS) is disordered. Over residues 521 to 530 (QPVGPSSLLS) the composition is skewed to polar residues. At serine 555 the chain carries Phosphoserine. Disordered regions lie at residues 564 to 584 (GLRR…PHDS) and 601 to 634 (IPTP…RLGT).

It belongs to the potassium channel family. D (Shal) (TC 1.A.1.2) subfamily. Kv4.1/KCND1 sub-subfamily. As to quaternary structure, component of heteromultimeric potassium channels. Identified in potassium channel complexes containing KCND1, KCND2, KCND3, KCNIP1, KCNIP2, KCNIP3, KCNIP4, DPP6 and DPP10. Detected in carotid body chemoreceptor cells and in frontal cortex.

Its subcellular location is the cell membrane. It catalyses the reaction K(+)(in) = K(+)(out). In terms of biological role, A-type voltage-gated potassium channel that mediates transmembrane potassium transport in excitable membranes in the brain. Mediates A-type current I(SA) in suprachiasmatic nucleus (SCN) neurons. Exhibits a low-threshold A-type current with a hyperpolarized steady-state inactivation midpoint and the recovery process was steeply voltage-dependent, with recovery being markedly faster at more negative potentials. May regulates repetitive firing rates in the suprachiasmatic nucleus (SCN) neurons and circadian rhythms in neuronal excitability and behavior. Contributes to the regulation of the circadian rhythm of action potential firing in suprachiasmatic nucleus neurons, which regulates the circadian rhythm of locomotor activity. The regulatory subunit KCNIP1 modulates the kinetics of channel inactivation, increases the current amplitudes and accelerates recovery from inactivation, shifts activation in a depolarizing direction. The regulatory subunit DPP10 decreases the voltage sensitivity of the inactivation channel gating. The chain is A-type voltage-gated potassium channel KCND1 from Oryctolagus cuniculus (Rabbit).